A 396-amino-acid chain; its full sequence is Probable sugar efflux transporter (396 aa).

Topologically, residues 1 to 14 (MTINPVSRKVAWLR) are cytoplasmic. Residues 15–35 (VVTLAIAAFIFNTTEFVPVGL) traverse the membrane as a helical segment. Residues 36 to 49 (LSDIAESFHMQTAQ) are Periplasmic-facing. Residues 50 to 70 (VGIMLTIYAWVVAVMSLPFML) form a helical membrane-spanning segment. Residues 71-80 (LTSQMERRKL) are Cytoplasmic-facing. The chain crosses the membrane as a helical span at residues 81-101 (LIYLFVLFIASHVLSFLAWNF). A topological domain (periplasmic) is located at residue T102. A helical membrane pass occupies residues 103–123 (VLVISRIGIAFAHAIFWSITA). Topologically, residues 124-135 (SLAIRLAPAGKR) are cytoplasmic. Residues 136 to 156 (AQALSLIATGTALAMVLGLPI) traverse the membrane as a helical segment. Residues 157–168 (GRVVGQYFGWRT) are Periplasmic-facing. A helical membrane pass occupies residues 169-189 (TFFAIGMGALITLLCLIKLLP). Topologically, residues 190–208 (KLPSEHSGSLKSLPLLFRR) are cytoplasmic. A helical transmembrane segment spans residues 209–229 (PALMSLYVLTVVVVTAHYTAY). The Periplasmic segment spans residues 230–245 (SYIEPFVQNVAGLSAN). The chain crosses the membrane as a helical span at residues 246-266 (FATVLLLILGGAGIIGSLVFG). At 267 to 274 (KLGNRHAS) the chain is on the cytoplasmic side. The helical transmembrane segment at 275–295 (SLVSIAIALLVVCLLLLLPAA) threads the bilayer. The Periplasmic portion of the chain corresponds to 296–300 (ESEAH). Residues 301–321 (LAILSIFWGIAIMVIGLGMQV) traverse the membrane as a helical segment. The Cytoplasmic segment spans residues 322-332 (KVLALAPDATD). A helical membrane pass occupies residues 333–353 (VAMALFSGIFNIGIGAGALVG). The Periplasmic segment spans residues 354 to 363 (NQVSLHWSMS). A helical membrane pass occupies residues 364-384 (AIGYIGAIPACAALVWAVLIF). Residues 385-396 (RKWPVTLEEQPH) are Cytoplasmic-facing.

It belongs to the major facilitator superfamily. SotB (TC 2.A.1.2) family.

Its subcellular location is the cell inner membrane. Functionally, involved in the efflux of sugars. The physiological role may be the reduction of the intracellular concentration of toxic sugars or sugar metabolites. This is Probable sugar efflux transporter from Salmonella typhimurium (strain LT2 / SGSC1412 / ATCC 700720).